The chain runs to 318 residues: Melanoma-associated antigen 8 (318 aa).

A disordered region spans residues M1–H103. The region spanning L112 to A311 is the MAGE domain.

In terms of tissue distribution, expressed in many tumors of several types, such as melanoma, head and neck squamous cell carcinoma, lung carcinoma and breast carcinoma, but not in normal tissues except for testis and placenta.

Not known, though may play a role in embryonal development and tumor transformation or aspects of tumor progression. The sequence is that of Melanoma-associated antigen 8 (MAGEA8) from Homo sapiens (Human).